The sequence spans 473 residues: Allene oxide synthase CYP74A2 (473 aa).

Residues Lys88, His119, and Lys123 each coordinate heme b. Ser199 and Lys282 together coordinate (13S)-hydroperoxy-(9Z,11E)-octadecadienoate. Heme b contacts are provided by Lys424 and Cys426.

This sequence belongs to the cytochrome P450 family. Heme b is required as a cofactor.

The catalysed reaction is (13S)-hydroperoxy-(9Z,11E,15Z)-octadecatrienoate = (9Z,13S,15Z)-12,13-epoxyoctadeca-9,11,15-trienoate + H2O. It carries out the reaction (13S)-hydroperoxy-(9Z,11E)-octadecadienoate = (9Z,13S)-12,13-epoxyoctadeca-9,11-dienoate + H2O. Its pathway is lipid metabolism; oxylipin biosynthesis. Its function is as follows. Cytochrome P450 enzyme involved in the biosynthesis of oxylipin jasmonates, important phytohormones acting as growth regulators and signaling molecules for plant defense. Functions as an allene oxide synthase that converts hydroperoxy fatty acids to unstable allene epoxides. Catalyzes the dehydration of 13-HPOTE ((13S)-hydroperoxy-(9Z,11E,15Z)-octadecatrienoate). Also catalyzes the dehydration of 13-HPODE ((13S)-hydroperoxy-(9Z,11E)-octadecadienoate). This Parthenium argentatum (Guayule rubber plant) protein is Allene oxide synthase CYP74A2.